Consider the following 1203-residue polypeptide: Cation-transporting ATPase catp-5 (1203 aa).

Residues 1–68 (MNTSEREPLL…YAYKETIGRQ (68 aa)) are Cytoplasmic-facing. The disordered stretch occupies residues 21–42 (TTDNPSTKIMKREKDNPKAKTT). Residues 69 to 89 (ILFWLLTIVTLGFYQLLAYWV) traverse the membrane as a helical segment. At 90–209 (KSLFVKVRFQ…RKIYNMNALA (120 aa)) the chain is on the extracellular side. A helical membrane pass occupies residues 210–230 (LALTPILVILFKEVLGPFYLF). At 231–242 (QCFSVALWYSDN) the chain is on the cytoplasmic side. The helical transmembrane segment at 243 to 263 (YAYYASVIVIITVGSAAVAVY) threads the bilayer. The Extracellular segment spans residues 264 to 297 (QMRAQEKRIRNMVGDTISVIVRRDGHDITIDASE). A helical transmembrane segment spans residues 298–318 (IVPMDILILPSNTFILPCDCL). At 319–414 (LMNGTVIVNE…KPQEKEALKD (96 aa)) the chain is on the cytoplasmic side. The chain crosses the membrane as a helical span at residues 415-435 (VMVFILVLGFIALIGFIYTVI). Residues 436–451 (EMVSRGESLKHIIIRS) lie on the Extracellular side of the membrane. The chain crosses the membrane as a helical span at residues 452–472 (LDIITIVVPPALPAAMSVGII). The Cytoplasmic segment spans residues 473 to 935 (NANSRLKKKK…KEGRCALVTS (463 aa)). Residue aspartate 503 is the 4-aspartylphosphate intermediate of the active site. The segment at 595-617 (ETQDFDTVQPTVLRPPPEQATYH) is disordered. Mg(2+)-binding residues include aspartate 883 and aspartate 887. Residues 936-956 (YAVSKYMAAYSLNEFLSVMLL) traverse the membrane as a helical segment. Residues 957–962 (YNDGTN) are Extracellular-facing. A helical transmembrane segment spans residues 963 to 983 (ISDGQFLYIDLVLITLVALFL). Over 984–1007 (GNTEASRKLSGIPPPRRLATSAFY) the chain is Cytoplasmic. The chain crosses the membrane as a helical span at residues 1008–1028 (FSVFGQMFFNIITQTTGYLLV). The Extracellular segment spans residues 1029–1046 (RGQSWYVPNPEELDNTTT). The helical transmembrane segment at 1047 to 1067 (MIGTTVFFTSCCMYLGYAFVY) threads the bilayer. The Cytoplasmic portion of the chain corresponds to 1068 to 1085 (SKGHPYRRSVFTNWLLCG). The helical transmembrane segment at 1086-1106 (IIFVIGAINMVMIFTNMGFLM) threads the bilayer. At 1107-1120 (NLMGFVYVPSTSMR) the chain is on the extracellular side. The helical transmembrane segment at 1121 to 1141 (FILLAISLAGVFLSLLYEHFF) threads the bilayer. Residues 1142–1203 (VEKVVAIHFE…DRKETIESKC (62 aa)) lie on the Cytoplasmic side of the membrane.

Belongs to the cation transport ATPase (P-type) (TC 3.A.3) family. Type V subfamily. Expressed in the 20 intestinal cells and in the excretory cell.

It localises to the apical cell membrane. It catalyses the reaction ATP + H2O = ADP + phosphate + H(+). Functionally, involved in the uptake and/or transport of polyamines, probably through ATP hydrolysis. This contributes to the maintenance of intracellular polyamine levels. Polyamines are essential for cell proliferation and are implicated in cellular processes, ranging from DNA replication to apoptosis. This chain is Cation-transporting ATPase catp-5, found in Caenorhabditis elegans.